The primary structure comprises 118 residues: Large ribosomal subunit protein uL18 (118 aa).

This sequence belongs to the universal ribosomal protein uL18 family. Part of the 50S ribosomal subunit; part of the 5S rRNA/L5/L18/L25 subcomplex. Contacts the 5S and 23S rRNAs.

Functionally, this is one of the proteins that bind and probably mediate the attachment of the 5S RNA into the large ribosomal subunit, where it forms part of the central protuberance. The chain is Large ribosomal subunit protein uL18 from Helicobacter hepaticus (strain ATCC 51449 / 3B1).